The sequence spans 231 residues: Protein RhiA (231 aa).

May be involved in plant-microbe interaction. The chain is Protein RhiA (rhiA) from Rhizobium leguminosarum bv. viciae.